A 449-amino-acid chain; its full sequence is Phosphoglucosamine mutase (449 aa).

Serine 100 acts as the Phosphoserine intermediate in catalysis. Residues serine 100, aspartate 241, aspartate 243, and aspartate 245 each contribute to the Mg(2+) site. Phosphoserine is present on serine 100.

This sequence belongs to the phosphohexose mutase family. The cofactor is Mg(2+). In terms of processing, activated by phosphorylation.

The enzyme catalyses alpha-D-glucosamine 1-phosphate = D-glucosamine 6-phosphate. Its function is as follows. Catalyzes the conversion of glucosamine-6-phosphate to glucosamine-1-phosphate. This Clostridium botulinum (strain Kyoto / Type A2) protein is Phosphoglucosamine mutase.